Reading from the N-terminus, the 136-residue chain is Transport protein particle 20 kDa subunit (136 aa).

This sequence belongs to the TRAPP small subunits family. Sedlin subfamily.

The protein localises to the cytoplasm. It is found in the golgi apparatus. Its subcellular location is the cis-Golgi network. The protein resides in the endoplasmic reticulum. Component of the TRAPP I and TRAPP II complexes. TRAPP I plays a key role in the late stages of endoplasmic reticulum to Golgi traffic. TRAPP II seems to play a role in intra-Golgi transport. In Schizosaccharomyces pombe (strain 972 / ATCC 24843) (Fission yeast), this protein is Transport protein particle 20 kDa subunit (trs20).